Reading from the N-terminus, the 669-residue chain is UvrABC system protein B (669 aa).

Positions threonine 26–arginine 183 constitute a Helicase ATP-binding domain. Glycine 39–threonine 46 provides a ligand contact to ATP. Residues tyrosine 92–isoleucine 115 carry the Beta-hairpin motif. In terms of domain architecture, Helicase C-terminal spans glutamine 431–leucine 597. Residues alanine 631–alanine 666 form the UVR domain.

The protein belongs to the UvrB family. Forms a heterotetramer with UvrA during the search for lesions. Interacts with UvrC in an incision complex.

It is found in the cytoplasm. The UvrABC repair system catalyzes the recognition and processing of DNA lesions. A damage recognition complex composed of 2 UvrA and 2 UvrB subunits scans DNA for abnormalities. Upon binding of the UvrA(2)B(2) complex to a putative damaged site, the DNA wraps around one UvrB monomer. DNA wrap is dependent on ATP binding by UvrB and probably causes local melting of the DNA helix, facilitating insertion of UvrB beta-hairpin between the DNA strands. Then UvrB probes one DNA strand for the presence of a lesion. If a lesion is found the UvrA subunits dissociate and the UvrB-DNA preincision complex is formed. This complex is subsequently bound by UvrC and the second UvrB is released. If no lesion is found, the DNA wraps around the other UvrB subunit that will check the other stand for damage. In Xylella fastidiosa (strain M23), this protein is UvrABC system protein B.